Consider the following 861-residue polypeptide: Cone cGMP-specific 3',5'-cyclic phosphodiesterase subunit alpha' (861 aa).

2 consecutive GAF domains span residues 75 to 224 and 256 to 433; these read SAEQ…AVAL and DVER…GWSL. 3',5'-cyclic GMP contacts are provided by residues S97, N116, 169–172, and T176; that span reads DKQT. Residues 486–819 enclose the PDEase domain; that stretch reads EERQLLAILK…VEWKSLAEEY (334 aa). Residue H562 is the Proton donor of the active site. The a divalent metal cation site is built by H566, H602, D603, and D723. Over residues 826-839 the composition is skewed to basic and acidic residues; it reads TEEEAGKQEEEASD. The tract at residues 826 to 861 is disordered; the sequence is TEEEAGKQEEEASDGKAATDLGGSAEDKKSKTCLML. Residue C858 is modified to Cysteine methyl ester. C858 is lipidated: S-geranylgeranyl cysteine. Positions 859–861 are cleaved as a propeptide — removed in mature form; it reads LML.

Belongs to the cyclic nucleotide phosphodiesterase family. Composed of two alpha' subunits that are associated with 3 smaller proteins of 11, 13, and 15 kDa. The cofactor is a divalent metal cation.

The protein resides in the cell membrane. It catalyses the reaction 3',5'-cyclic GMP + H2O = GMP + H(+). Functionally, as cone-specific cGMP phosphodiesterase, it plays an essential role in light detection and cone phototransduction by rapidly decreasing intracellular levels of cGMP. In Mus musculus (Mouse), this protein is Cone cGMP-specific 3',5'-cyclic phosphodiesterase subunit alpha' (Pde6c).